Consider the following 311-residue polypeptide: Probable manganese-dependent inorganic pyrophosphatase (311 aa).

Mn(2+) is bound by residues His-9, Asp-13, Asp-15, Asp-75, His-97, and Asp-149.

The protein belongs to the PPase class C family. Mn(2+) is required as a cofactor.

The protein localises to the cytoplasm. The catalysed reaction is diphosphate + H2O = 2 phosphate + H(+). This Lactobacillus gasseri (strain ATCC 33323 / DSM 20243 / BCRC 14619 / CIP 102991 / JCM 1131 / KCTC 3163 / NCIMB 11718 / NCTC 13722 / AM63) protein is Probable manganese-dependent inorganic pyrophosphatase.